The following is a 935-amino-acid chain: Auxin response factor 6 (935 aa).

Residues 129 to 231 (FCKTLTASDT…QLLLGIRRAN (103 aa)) constitute a DNA-binding region (TF-B3). 2 disordered regions span residues 536-624 (QAYL…PLHT) and 645-714 (SAMT…SASD). Composition is skewed to low complexity over residues 546-565 (QPQS…QQQQ) and 573-582 (SASSAAVVSA). Composition is skewed to polar residues over residues 583–624 (MSQF…PLHT) and 661–689 (SSFQ…SNVP). One can recognise a PB1 domain in the interval 796–880 (NTFVKVYKSG…WCIKILSPQE (85 aa)). A compositionally biased stretch (polar residues) spans 896 to 909 (PSSNNVDKLPSNGN). Positions 896–917 (PSSNNVDKLPSNGNCDDFGNRS) are disordered.

It belongs to the ARF family. As to quaternary structure, homodimers and heterodimers. Expressed in the whole plant.

The protein localises to the nucleus. Its function is as follows. Auxin response factors (ARFs) are transcriptional factors that bind specifically to the DNA sequence 5'-TGTCTC-3' found in the auxin-responsive promoter elements (AuxREs). Seems to act as transcriptional activator. Formation of heterodimers with Aux/IAA proteins may alter their ability to modulate early auxin response genes expression. Regulates both stamen and gynoecium maturation. Promotes jasmonic acid production. Partially redundant with ARF8. This Arabidopsis thaliana (Mouse-ear cress) protein is Auxin response factor 6 (ARF6).